The following is a 262-amino-acid chain: Ribosomal RNA small subunit methyltransferase A (262 aa).

Residues histidine 13, leucine 15, glycine 40, glutamate 61, aspartate 85, and asparagine 103 each coordinate S-adenosyl-L-methionine.

This sequence belongs to the class I-like SAM-binding methyltransferase superfamily. rRNA adenine N(6)-methyltransferase family. RsmA subfamily.

It localises to the cytoplasm. The enzyme catalyses adenosine(1518)/adenosine(1519) in 16S rRNA + 4 S-adenosyl-L-methionine = N(6)-dimethyladenosine(1518)/N(6)-dimethyladenosine(1519) in 16S rRNA + 4 S-adenosyl-L-homocysteine + 4 H(+). Its function is as follows. Specifically dimethylates two adjacent adenosines (A1518 and A1519) in the loop of a conserved hairpin near the 3'-end of 16S rRNA in the 30S particle. May play a critical role in biogenesis of 30S subunits. This is Ribosomal RNA small subunit methyltransferase A from Bordetella petrii (strain ATCC BAA-461 / DSM 12804 / CCUG 43448).